The primary structure comprises 403 residues: Lissencephaly-1 homolog 1 (403 aa).

One can recognise a LisH domain in the interval 7–38 (QRDELNQAIHQYLLISYQQSAQLFKTEAAVKD). Residues 51–87 (NSIVRLSKRVITLEQQVEQLNEQLAQAQAGKIQFNKS) adopt a coiled-coil conformation. WD repeat units lie at residues 103–142 (GHRA…FEKT), 145–184 (GHTS…CVKT), 187–226 (GHEH…CKKT), 229–270 (EHQE…HQLS), 271–327 (GHEH…NLFT), 330–369 (GHDN…QKKK), and 373–403 (AHDK…WLLS).

It belongs to the WD repeat LIS1/nudF family.

Its subcellular location is the cytoplasm. It localises to the cytoskeleton. The protein localises to the microtubule organizing center. The protein resides in the centrosome. Functionally, positively regulates the activity of the minus-end directed microtubule motor protein dynein. May enhance dynein-mediated microtubule sliding by targeting dynein to the microtubule plus end. Required for several dynein- and microtubule-dependent processes. The protein is Lissencephaly-1 homolog 1 of Paramecium tetraurelia.